The following is a 146-amino-acid chain: NADH-quinone oxidoreductase subunit A (146 aa).

Transmembrane regions (helical) follow at residues 4 to 24 (IYHW…VFML), 63 to 83 (LIAM…AWAI), and 91 to 111 (IGFS…IYLI).

It belongs to the complex I subunit 3 family. As to quaternary structure, NDH-1 is composed of 13 different subunits. Subunits NuoA, H, J, K, L, M, N constitute the membrane sector of the complex.

It is found in the cell inner membrane. It catalyses the reaction a quinone + NADH + 5 H(+)(in) = a quinol + NAD(+) + 4 H(+)(out). NDH-1 shuttles electrons from NADH, via FMN and iron-sulfur (Fe-S) centers, to quinones in the respiratory chain. The immediate electron acceptor for the enzyme in this species is believed to be ubiquinone. Couples the redox reaction to proton translocation (for every two electrons transferred, four hydrogen ions are translocated across the cytoplasmic membrane), and thus conserves the redox energy in a proton gradient. The chain is NADH-quinone oxidoreductase subunit A from Blochmanniella pennsylvanica (strain BPEN).